A 381-amino-acid polypeptide reads, in one-letter code: Queuine tRNA-ribosyltransferase (381 aa).

Asp-92 acts as the Proton acceptor in catalysis. Residues 92–96 (DSGGF), Asp-146, Gln-190, and Gly-217 contribute to the substrate site. Positions 248 to 254 (GVGRPED) are RNA binding. Asp-267 acts as the Nucleophile in catalysis. The segment at 272–276 (TRNAR) is RNA binding; important for wobble base 34 recognition. Cys-305, Cys-307, Cys-310, and His-337 together coordinate Zn(2+).

Belongs to the queuine tRNA-ribosyltransferase family. In terms of assembly, homodimer. Within each dimer, one monomer is responsible for RNA recognition and catalysis, while the other monomer binds to the replacement base PreQ1. Zn(2+) serves as cofactor.

It catalyses the reaction 7-aminomethyl-7-carbaguanine + guanosine(34) in tRNA = 7-aminomethyl-7-carbaguanosine(34) in tRNA + guanine. Its pathway is tRNA modification; tRNA-queuosine biosynthesis. Its function is as follows. Catalyzes the base-exchange of a guanine (G) residue with the queuine precursor 7-aminomethyl-7-deazaguanine (PreQ1) at position 34 (anticodon wobble position) in tRNAs with GU(N) anticodons (tRNA-Asp, -Asn, -His and -Tyr). Catalysis occurs through a double-displacement mechanism. The nucleophile active site attacks the C1' of nucleotide 34 to detach the guanine base from the RNA, forming a covalent enzyme-RNA intermediate. The proton acceptor active site deprotonates the incoming PreQ1, allowing a nucleophilic attack on the C1' of the ribose to form the product. After dissociation, two additional enzymatic reactions on the tRNA convert PreQ1 to queuine (Q), resulting in the hypermodified nucleoside queuosine (7-(((4,5-cis-dihydroxy-2-cyclopenten-1-yl)amino)methyl)-7-deazaguanosine). The polypeptide is Queuine tRNA-ribosyltransferase (Xanthomonas euvesicatoria pv. vesicatoria (strain 85-10) (Xanthomonas campestris pv. vesicatoria)).